A 121-amino-acid polypeptide reads, in one-letter code: Conopressin-conophysin (121 aa).

The N-terminal stretch at 1–20 (MGRLTMALCWLLLLLLTTQA) is a signal peptide. An intrachain disulfide couples C21 to C26. P27 is modified (4-hydroxyproline; partial; in Conopressin-ba1c). Position 29 is a glycine amide (G29). 7 cysteine pairs are disulfide-bonded: C43–C83, C46–C57, C51–C73, C58–C63, C90–C108, C102–C120, and C109–C114.

Belongs to the vasopressin/oxytocin family. As to expression, expressed by the venom duct.

It localises to the secreted. This is Conopressin-conophysin from Conus bayani (Bayan's cone).